The primary structure comprises 288 residues: Protein shisa-2 (288 aa).

An N-terminal signal peptide occupies residues 1–23 (MWLEGSPLAVLAAVSFLLSVLAA). At 24 to 110 (AQGSGEYCHG…DSTAVPIYVP (87 aa)) the chain is on the extracellular side. A helical membrane pass occupies residues 111–131 (FLIVGSVFVAFIIVGSLVAIC). At 132 to 288 (CCRCLRPKQE…EQMMYPAVTV (157 aa)) the chain is on the cytoplasmic side. Residues 161–188 (SSASTSRGSSSRQSSTAASSSSSANSGA) are compositionally biased toward low complexity. The disordered stretch occupies residues 161–198 (SSASTSRGSSSRQSSTAASSSSSANSGARPPPTRSQTN).

It belongs to the shisa family. As to quaternary structure, interacts with fzd8 and fgfr1.

The protein localises to the endoplasmic reticulum membrane. Plays an essential role in the maturation of presomitic mesoderm cells by individual attenuation of both fgf and wnt signaling. Inhibits both wnt and fgf signaling through the regulation of protein maturation and cell surface transportation of their receptors within the endoplasmic reticulum. The protein is Protein shisa-2 (shisa2) of Xenopus laevis (African clawed frog).